The sequence spans 365 residues: Flagellar P-ring protein (365 aa).

The N-terminal stretch at 1–19 (MMLSLCAIAGLLLAPSIQA) is a signal peptide.

Belongs to the FlgI family. The basal body constitutes a major portion of the flagellar organelle and consists of four rings (L,P,S, and M) mounted on a central rod.

The protein resides in the periplasm. Its subcellular location is the bacterial flagellum basal body. Its function is as follows. Assembles around the rod to form the L-ring and probably protects the motor/basal body from shearing forces during rotation. The chain is Flagellar P-ring protein from Sodalis glossinidius (strain morsitans).